The chain runs to 218 residues: Small ribosomal subunit protein uS3c (218 aa).

A KH type-2 domain is found at 47–118 (VQKHMRISSG…RLNIAIARVA (72 aa)).

Belongs to the universal ribosomal protein uS3 family. Part of the 30S ribosomal subunit.

The protein resides in the plastid. It is found in the chloroplast. This chain is Small ribosomal subunit protein uS3c (rps3), found in Nymphaea alba (White water-lily).